Consider the following 300-residue polypeptide: Soluble inorganic pyrophosphatase 6, chloroplastic (300 aa).

A chloroplast-targeting transit peptide spans 1–66 (MAATRVLTAA…CSAIYNPQVK (66 aa)). Diphosphate is bound at residue arginine 140. Tyrosine 142 serves as the catalytic Proton donor. Residues aspartate 173, aspartate 178, and aspartate 210 each coordinate Mg(2+).

The protein belongs to the PPase family. Mg(2+) serves as cofactor. In terms of tissue distribution, expressed in all tissues tested. Highest expression in flowers, leaves and roots. Lower levels of expression in siliques, stems, ovary, stigma and pollen.

It is found in the plastid. Its subcellular location is the chloroplast stroma. The enzyme catalyses diphosphate + H2O = 2 phosphate + H(+). Its activity is regulated as follows. Inhibited by NaF. This Arabidopsis thaliana (Mouse-ear cress) protein is Soluble inorganic pyrophosphatase 6, chloroplastic.